The primary structure comprises 43 residues: Protein PsbN (43 aa).

The helical transmembrane segment at 7–27 (LVVAIAAITICITAFAIYTAF) threads the bilayer.

This sequence belongs to the PsbN family.

It localises to the cellular thylakoid membrane. Its function is as follows. May play a role in photosystem I and II biogenesis. The protein is Protein PsbN of Synechococcus sp. (strain JA-3-3Ab) (Cyanobacteria bacterium Yellowstone A-Prime).